The sequence spans 664 residues: Protein LYK5 (664 aa).

The N-terminal stretch at 1-26 is a signal peptide; the sequence is MAACTLHALSVTLFLLLFFAVSPAKA. Residues 27-277 lie on the Extracellular side of the membrane; it reads QQPYVNNHQL…DPPGSSSSHK (251 aa). Asparagine 45, asparagine 81, asparagine 111, asparagine 125, and asparagine 129 each carry an N-linked (GlcNAc...) asparagine glycan. 3 disulfides stabilise this stretch: cysteine 52–cysteine 114, cysteine 58–cysteine 181, and cysteine 112–cysteine 179. A chitin-binding site is contributed by 135-141; that stretch reads GDETYFS. Residue asparagine 144 is glycosylated (N-linked (GlcNAc...) asparagine). 164–170 contributes to the chitin binding site; it reads ERQLTPG. Positions 195–238 constitute a LysM domain; that stretch reads LTYLVAMGDSISGIAEMFNSTSAAITEGNELTSDNIFFFTPVLV. An N-linked (GlcNAc...) asparagine glycan is attached at asparagine 213. Positions 251–269 are enriched in pro residues; sequence PSPPPPPVVATPPQTPVDP. The disordered stretch occupies residues 251–270; the sequence is PSPPPPPVVATPPQTPVDPP. The chain crosses the membrane as a helical span at residues 278–298; the sequence is WIYIGIGIGAGLLLLLSILAL. At 299 to 664 the chain is on the cytoplasmic side; the sequence is CFYKRRSKKK…DLLRSGSLGN (366 aa). The 293-residue stretch at 351-643 folds into the Protein kinase domain; that stretch reads KSAIESLTLY…TQVLTTLSMI (293 aa). ATP-binding positions include 357 to 365 and lysine 395; that span reads LTLYRFNDL.

This sequence belongs to the protein kinase superfamily. Ser/Thr protein kinase family.

The protein resides in the cell membrane. Its function is as follows. May recognize microbe-derived N-acetylglucosamine (NAG)-containing ligands. The polypeptide is Protein LYK5 (LYK5) (Arabidopsis thaliana (Mouse-ear cress)).